The sequence spans 415 residues: Probable N-acetyl-gamma-glutamyl-phosphate reductase, chloroplastic (415 aa).

Residues 1-74 (MGSTALGGGA…SGVKSGEEVR (74 aa)) constitute a chloroplast transit peptide. Residues 48-68 (VRASVASSPQKQHSPKTSGVK) are disordered. The span at 56–67 (PQKQHSPKTSGV) shows a compositional bias: polar residues. The active site involves cysteine 219.

Belongs to the NAGSA dehydrogenase family. Type 1 subfamily. In terms of assembly, homotetramer.

It is found in the plastid. The protein localises to the chloroplast. It carries out the reaction N-acetyl-L-glutamate 5-semialdehyde + phosphate + NADP(+) = N-acetyl-L-glutamyl 5-phosphate + NADPH + H(+). It participates in amino-acid biosynthesis; L-arginine biosynthesis; N(2)-acetyl-L-ornithine from L-glutamate: step 3/4. This chain is Probable N-acetyl-gamma-glutamyl-phosphate reductase, chloroplastic, found in Oryza sativa subsp. japonica (Rice).